A 337-amino-acid chain; its full sequence is 2-oxoglutarate receptor 1 (337 aa).

The Extracellular portion of the chain corresponds to 1 to 38; sequence MIEPLDSPASDSDFLDYPSALGNCTDEQISFKMQYLPV. N-linked (GlcNAc...) asparagine glycosylation is present at N23. The helical transmembrane segment at 39 to 59 threads the bilayer; the sequence is IYSIIFLVGFPGNTVAISIYI. Over 60–69 the chain is Cytoplasmic; it reads FKMRPWRGST. Residues 70–90 form a helical membrane-spanning segment; sequence VIMLNLALTDLLYLTSLPFLI. The Extracellular segment spans residues 91-116; the sequence is HYYASGENWIFGDFMCKFIRFGFHFN. Cysteines 106 and 183 form a disulfide. A helical transmembrane segment spans residues 117–137; the sequence is LYSSILFLTCFSLFRYVVIIH. Residues 138–151 lie on the Cytoplasmic side of the membrane; it reads PMSCFSIQKTRWAV. Residues 152 to 172 traverse the membrane as a helical segment; it reads VACAGVWVISLVAVMPMTFLI. Over 173 to 200 the chain is Extracellular; that stretch reads TSTTRTNRSACLDLTSSDDLTTIKWYNL. Residues 201-221 form a helical membrane-spanning segment; sequence ILTATTFCLPLVIVTLCYTTI. The Cytoplasmic portion of the chain corresponds to 222-242; the sequence is ISTLTHGPRTHSCFKQKARRL. The chain crosses the membrane as a helical span at residues 243–263; it reads TILLLLVFYICFLPFHILRVI. The Extracellular segment spans residues 264-284; it reads RIESRLLSISCSIESHIHEAY. Residues 285–305 traverse the membrane as a helical segment; it reads IVSRPLAALNTFGNLLLYVVV. Topologically, residues 306-337 are cytoplasmic; it reads SNNFQQAFCSIVRCKASGDLEQGKKDSCSNNP.

This sequence belongs to the G-protein coupled receptor 1 family. As to expression, predominantly expressed in the kidney with limited expression in the testis and the smooth muscle. Expressed in SLC26A4/pendrin-positive type B and non-A non-B intercalated cells (at protein level).

The protein localises to the cell membrane. G protein-coupled receptor for dicarboxylates and amino dicarboxylates. Receptor for itaconate produced by activated macrophages upon bacterial infection. In the respiratory epithelium, couples the binding of itaconate to the activation of GNA11 and downstream intracellular Ca(2+) release, leading to mucocilliary clearance of airborne pathogens. Receptor for leukotriene E4 (LTE4) produced by mast cells upon allergic inflammation. Binds with high affinity to LTE4 and elicits mucin release from pulmonary epithelium in response to airborne fungi allergens. Regulates mucin-producing goblet cell homeostasis. Receptor for alpha-ketoglutarate produced by proximal tubule renal cells upon metabolic alkalosis. In an intrarenal paracrine signaling pathway, binds alpha-ketoglutarate and drives transepithelial salt reabsorption and bicarbonate secretion by SLC26A4/pendrin-positive intercalated cells. In Mus musculus (Mouse), this protein is 2-oxoglutarate receptor 1 (Oxgr1).